A 354-amino-acid polypeptide reads, in one-letter code: Uroporphyrinogen decarboxylase (354 aa).

Residues 27-31 (RQAGR), Phe-46, Asp-77, Tyr-154, Thr-209, and His-327 contribute to the substrate site.

Belongs to the uroporphyrinogen decarboxylase family. Homodimer.

The protein localises to the cytoplasm. The catalysed reaction is uroporphyrinogen III + 4 H(+) = coproporphyrinogen III + 4 CO2. It functions in the pathway porphyrin-containing compound metabolism; protoporphyrin-IX biosynthesis; coproporphyrinogen-III from 5-aminolevulinate: step 4/4. Functionally, catalyzes the decarboxylation of four acetate groups of uroporphyrinogen-III to yield coproporphyrinogen-III. This Salmonella typhi protein is Uroporphyrinogen decarboxylase.